Here is a 149-residue protein sequence, read N- to C-terminus: Large ribosomal subunit protein bL9 (149 aa).

Belongs to the bacterial ribosomal protein bL9 family.

Functionally, binds to the 23S rRNA. This Buchnera aphidicola subsp. Cinara cedri (strain Cc) protein is Large ribosomal subunit protein bL9.